The chain runs to 824 residues: Phenylalanine--tRNA ligase beta subunit (824 aa).

Residues 39-153 enclose the tRNA-binding domain; that stretch reads SEQAKNVVIG…NIPPIGSNAV (115 aa). The B5 domain occupies 414-507; the sequence is KKSISVNLRM…RLIGYDNFDS (94 aa). Mg(2+)-binding residues include Asp485, Asp491, Glu494, and Glu495. The 94-residue stretch at 730–823 folds into the FDX-ACB domain; the sequence is PTVPYMERDI…LKEKIKAELR (94 aa).

This sequence belongs to the phenylalanyl-tRNA synthetase beta subunit family. Type 1 subfamily. Tetramer of two alpha and two beta subunits. Mg(2+) serves as cofactor.

Its subcellular location is the cytoplasm. It carries out the reaction tRNA(Phe) + L-phenylalanine + ATP = L-phenylalanyl-tRNA(Phe) + AMP + diphosphate + H(+). The polypeptide is Phenylalanine--tRNA ligase beta subunit (Prochlorococcus marinus (strain NATL2A)).